The following is a 443-amino-acid chain: Trigger factor (443 aa).

Residues 161–246 (GDKVVIDFQG…IKKIMEGKLP (86 aa)) enclose the PPIase FKBP-type domain.

It belongs to the FKBP-type PPIase family. Tig subfamily.

The protein localises to the cytoplasm. The catalysed reaction is [protein]-peptidylproline (omega=180) = [protein]-peptidylproline (omega=0). In terms of biological role, involved in protein export. Acts as a chaperone by maintaining the newly synthesized protein in an open conformation. Functions as a peptidyl-prolyl cis-trans isomerase. The sequence is that of Trigger factor from Legionella pneumophila subsp. pneumophila (strain Philadelphia 1 / ATCC 33152 / DSM 7513).